The primary structure comprises 245 residues: 8-amino-3,8-dideoxy-manno-octulosonate cytidylyltransferase (245 aa).

This sequence belongs to the KdsB family.

The protein resides in the cytoplasm. It catalyses the reaction 8-amino-3,8-dideoxy-alpha-D-manno-octulosonate + CTP = CMP-8-amino-3,8-dideoxy-alpha-D-manno-oct-2-ulosonate + diphosphate. It participates in bacterial outer membrane biogenesis; lipopolysaccharide biosynthesis. Its function is as follows. Activates KDO8N (a required 8-carbon sugar) for incorporation into bacterial lipopolysaccharide in the Shewanella genus. This Shewanella halifaxensis (strain HAW-EB4) protein is 8-amino-3,8-dideoxy-manno-octulosonate cytidylyltransferase.